A 523-amino-acid polypeptide reads, in one-letter code: 2-oxopropyl-CoM reductase, carboxylating (523 aa).

53–54 (AA) is an FAD binding site. R56 contributes to the 2-oxopropyl-coenzyme M binding site. FAD is bound at residue S81. C82 provides a ligand contact to 2-oxopropyl-coenzyme M. Residues C82 and C87 are joined by a disulfide bond. A158 contributes to the FAD binding site. Residues 222–225 (GSKT) and 245–246 (RT) each bind NADP(+). D353 lines the FAD pocket. Position 360 (E360) interacts with NADP(+). FAD is bound at residue M361. R365 lines the 2-oxopropyl-coenzyme M pocket. F501 is a binding site for FAD.

It belongs to the class-I pyridine nucleotide-disulfide oxidoreductase family. Homodimer. Component II of the aliphatic epoxide carboxylation complex together with components I, III and IV. It depends on FAD as a cofactor.

The enzyme catalyses coenzyme M + acetoacetate + NADP(+) = 2-oxopropyl-coenzyme M + CO2 + NADPH. The protein operates within alkene metabolism; propylene degradation. With respect to regulation, inhibited (at 40%) by the coenzyme M analog 2-bromoethanesulfonate (BES). BES is a time-dependent inactivator of dithiothreitol-reduced 2-KPCC, where the redox active cysteines are in the free thiol forms. BES does not inactivate air-oxidized 2-KPCC, where the redox active cysteine pair is in the disulfide form. BES specifically alkylates the interchange thiol that facilitates thioether bond cleavage and enolacetone formation during catalysis. Functionally, involved in aliphatic epoxide carboxylation. Catalyzes the reductive cleavage of the thioether bond of 2-oxopropyl-coenzyme M (2-KPC), and the subsequent carboxylation of the ketopropyl cleavage product, yielding the products acetoacetate and free coenzyme M. This is 2-oxopropyl-CoM reductase, carboxylating from Xanthobacter autotrophicus (strain ATCC BAA-1158 / Py2).